A 210-amino-acid chain; its full sequence is Aminoglycoside 2'-N-acetyltransferase (210 aa).

In terms of domain architecture, N-acetyltransferase spans 21-189; that stretch reads IHTSDLDQET…SLFVLPVDLP (169 aa). Residues aspartate 54 and 106–107 each bind substrate; that span reads EA. CoA contacts are provided by residues 108-110 and 115-120; these read VAV and RGDGLG. Residues serine 141 and 176-177 each bind substrate; that span reads ED.

Belongs to the AAC(2')-I acetyltransferase family. Homodimer.

Catalyzes the coenzyme A-dependent acetylation of the 2' hydroxyl or amino group of a broad spectrum of aminoglycosides. It confers resistance to aminoglycosides. The sequence is that of Aminoglycoside 2'-N-acetyltransferase (aac) from Mycolicibacterium smegmatis (strain ATCC 700084 / mc(2)155) (Mycobacterium smegmatis).